We begin with the raw amino-acid sequence, 318 residues long: ZAR1-like protein (318 aa).

Residues 149–211 (LSDPPEAGQP…PVDSSQPLGR (63 aa)) form a disordered region. Residues 155–169 (AGQPPPPLPPPSPPP) show a composition bias toward pro residues. Residues 219 to 304 (PKYGYFHCKD…QELCGRCKDK (86 aa)) form a 3CxxC-type zinc finger.

The protein belongs to the ZAR1 family. Interacts with YBX2.

It is found in the cytoplasm. It localises to the cytoplasmic ribonucleoprotein granule. MRNA-binding protein required for maternal mRNA storage, translation and degradation during oocyte maturation. Probably promotes formation of some phase-separated membraneless compartment that stores maternal mRNAs in oocytes: acts by undergoing liquid-liquid phase separation upon binding to maternal mRNAs. Binds to the 3'-UTR of maternal mRNAs, inhibiting their translation. The sequence is that of ZAR1-like protein (ZAR1L) from Bos taurus (Bovine).